The sequence spans 631 residues: Pro-interleukin-16 (631 aa).

Disordered regions lie at residues 30 to 269 and 317 to 344; these read ENPG…FPLT and PKEG…ASDT. Low complexity predominate over residues 132 to 144; sequence SSSSSSIKQRISS. Ser-221 carries the post-translational modification Phosphoserine. Over residues 322 to 344 the composition is skewed to polar residues; sequence SPTSSSNEDSAANGSAETSASDT. The interval 405 to 501 is interaction with PPP1R12A, PPP1R12B and PPP1R12C; the sequence is KQLDSIHVTI…IVTRKLTAES (97 aa). PDZ domains are found at residues 411-496 and 533-618; these read HVTI…VTRK and TVTL…IRRK.

Homotetramer. Pro-interleukin-16 interacts (via PDZ 2 domain) with PPP1R12A, PPP1R12B and PPP1R12C. Pro-interleukin-16 interacts with GRIN2A. Pro-interleukin-16 interacts with GABPB1. Pro-interleukin-16 interacts (via PDZ 3 domain) with HDAC3.

The protein resides in the secreted. Its subcellular location is the cytoplasm. It localises to the nucleus. In terms of biological role, interleukin-16 stimulates a migratory response in CD4+ lymphocytes, monocytes, and eosinophils. Primes CD4+ T-cells for IL-2 and IL-15 responsiveness. Also induces T-lymphocyte expression of interleukin 2 receptor. Ligand for CD4. Its function is as follows. Pro-interleukin-16 is involved in cell cycle progression in T-cells. Appears to be involved in transcriptional regulation of SKP2 and is probably part of a transcriptional repression complex on the core promoter of the SKP2 gene. May act as a scaffold for GABPB1 (the DNA-binding subunit the GABP transcription factor complex) and HDAC3 thus maintaining transcriptional repression and blocking cell cycle progression in resting T-cells. The chain is Pro-interleukin-16 (IL16) from Chlorocebus aethiops (Green monkey).